We begin with the raw amino-acid sequence, 251 residues long: 3-deoxy-manno-octulosonate cytidylyltransferase (251 aa).

This sequence belongs to the KdsB family.

Its subcellular location is the cytoplasm. The enzyme catalyses 3-deoxy-alpha-D-manno-oct-2-ulosonate + CTP = CMP-3-deoxy-beta-D-manno-octulosonate + diphosphate. It functions in the pathway nucleotide-sugar biosynthesis; CMP-3-deoxy-D-manno-octulosonate biosynthesis; CMP-3-deoxy-D-manno-octulosonate from 3-deoxy-D-manno-octulosonate and CTP: step 1/1. It participates in bacterial outer membrane biogenesis; lipopolysaccharide biosynthesis. Functionally, activates KDO (a required 8-carbon sugar) for incorporation into bacterial lipopolysaccharide in Gram-negative bacteria. The protein is 3-deoxy-manno-octulosonate cytidylyltransferase of Rhizobium johnstonii (strain DSM 114642 / LMG 32736 / 3841) (Rhizobium leguminosarum bv. viciae).